The following is a 284-amino-acid chain: L-ribulose-5-phosphate 3-epimerase UlaE (284 aa).

Belongs to the L-ribulose-5-phosphate 3-epimerase family.

It catalyses the reaction L-ribulose 5-phosphate = L-xylulose 5-phosphate. It functions in the pathway cofactor degradation; L-ascorbate degradation; D-xylulose 5-phosphate from L-ascorbate: step 3/4. Catalyzes the isomerization of L-xylulose-5-phosphate to L-ribulose-5-phosphate. Is involved in the anaerobic L-ascorbate utilization. This chain is L-ribulose-5-phosphate 3-epimerase UlaE, found in Salmonella choleraesuis (strain SC-B67).